Consider the following 218-residue polypeptide: uncharacterized protein (218 aa).

Positions 2 to 216 (IEVLNLTKKI…ETSEKVIYKK (215 aa)) constitute an ABC transporter domain. 34–41 (GSNGSGKT) is an ATP binding site.

The protein belongs to the ABC transporter superfamily.

This is an uncharacterized protein from Bacillus subtilis (strain 168).